A 419-amino-acid polypeptide reads, in one-letter code: DNA ligase (419 aa).

An NTD region spans residues methionine 1 to asparagine 120. The segment at arginine 121–leucine 317 is AD domain. Lysine 151 serves as the catalytic N6-AMP-lysine intermediate. ATP-binding residues include lysine 151, glutamate 203, and phenylalanine 232. Glutamate 203 contacts a divalent metal cation. Glutamate 291 is an a divalent metal cation binding site. Positions 294 and 316 each coordinate ATP. The segment at lysine 318–isoleucine 419 is OB domain.

Belongs to the ATP-dependent DNA ligase family.

It is found in the virion. The enzyme catalyses ATP + (deoxyribonucleotide)n-3'-hydroxyl + 5'-phospho-(deoxyribonucleotide)m = (deoxyribonucleotide)n+m + AMP + diphosphate.. In terms of biological role, very low-fidelity DNA ligase that seals nicks in double-stranded DNA during DNA repair. Together with the viral repair DNA polymerase X, fills the single nucleotide gaps generated by the AP endonuclease. It is not essential for viral replication and recombination. Displays a very low adenylation activity towards DNA with 3'-dideoxy- or 3'-amino-terminated nicks compared to regular nick DNA. This chain is DNA ligase, found in African swine fever virus (isolate Tick/South Africa/Pretoriuskop Pr4/1996) (ASFV).